The chain runs to 299 residues: Acetylglutamate kinase (299 aa).

Substrate is bound by residues 68 to 69 (GG), arginine 90, and asparagine 195.

This sequence belongs to the acetylglutamate kinase family. ArgB subfamily.

It is found in the cytoplasm. It carries out the reaction N-acetyl-L-glutamate + ATP = N-acetyl-L-glutamyl 5-phosphate + ADP. It functions in the pathway amino-acid biosynthesis; L-arginine biosynthesis; N(2)-acetyl-L-ornithine from L-glutamate: step 2/4. In terms of biological role, catalyzes the ATP-dependent phosphorylation of N-acetyl-L-glutamate. This is Acetylglutamate kinase from Erythrobacter litoralis (strain HTCC2594).